Reading from the N-terminus, the 444-residue chain is Phosphoglucosamine mutase (444 aa).

The active-site Phosphoserine intermediate is the Ser-101. Residues Ser-101, Asp-240, Asp-242, and Asp-244 each contribute to the Mg(2+) site. The residue at position 101 (Ser-101) is a Phosphoserine.

It belongs to the phosphohexose mutase family. Mg(2+) is required as a cofactor. Post-translationally, activated by phosphorylation.

It carries out the reaction alpha-D-glucosamine 1-phosphate = D-glucosamine 6-phosphate. Catalyzes the conversion of glucosamine-6-phosphate to glucosamine-1-phosphate. This is Phosphoglucosamine mutase from Aeromonas salmonicida (strain A449).